The sequence spans 380 residues: MKNEMLALILAGGQGTRLGKLTQSIAKPAVQFGGRYRIIDFALSNCANSGIHNVGVITQYQPLALNSHIGNGSSWGLDGINSGVSILQPYSASEGNRWFEGTSHAIYQNIDYIDSINPEYVLILSGDHIYKMDYDDMLQSHKDNNASLTVAVLDVPLKEASRFGIMNTDANNRIVEFEEKPENPKSTKASMGIYIFDWQRLRNMLVAAEKSNVDMSDFGKNVIPNYLESGESVYAYDFAGYWKDVGTVESLWEANMEYISPENALDSRNRRWKIYSRNLISPPNFISENSHVEDSLVVDGCFVDGTVKHSILSTGAQVKKGAVIEDSVIMSGAVIGKDAKIKRAIIGEGAIISDGVEIDGTEEVYVVGYNEKVGVPKDED.

Residues G164, 179–180 (EK), and S190 each bind alpha-D-glucose 1-phosphate.

The protein belongs to the bacterial/plant glucose-1-phosphate adenylyltransferase family. Homotetramer.

It catalyses the reaction alpha-D-glucose 1-phosphate + ATP + H(+) = ADP-alpha-D-glucose + diphosphate. The protein operates within glycan biosynthesis; glycogen biosynthesis. Involved in the biosynthesis of ADP-glucose, a building block required for the elongation reactions to produce glycogen. Catalyzes the reaction between ATP and alpha-D-glucose 1-phosphate (G1P) to produce pyrophosphate and ADP-Glc. This is Glucose-1-phosphate adenylyltransferase from Streptococcus sanguinis (strain SK36).